We begin with the raw amino-acid sequence, 304 residues long: Nod factor export ATP-binding protein I (304 aa).

Residues 6–236 (IDFRNVEKRF…EIGCDVIEIY (231 aa)) enclose the ABC transporter domain. 38-45 (GPNGAGKT) contributes to the ATP binding site.

This sequence belongs to the ABC transporter superfamily. Lipooligosaccharide exporter (TC 3.A.1.102) family. As to quaternary structure, the complex is composed of two ATP-binding proteins (NodI) and two transmembrane proteins (NodJ).

It is found in the cell inner membrane. Part of the ABC transporter complex NodIJ involved in the export of the nodulation factors (Nod factors), the bacterial signal molecules that induce symbiosis and subsequent nodulation induction. Nod factors are LCO (lipo-chitin oligosaccharide), a modified beta-1,4-linked N-acetylglucosamine oligosaccharide. This subunit is responsible for energy coupling to the transport system. The protein is Nod factor export ATP-binding protein I of Burkholderia lata (strain ATCC 17760 / DSM 23089 / LMG 22485 / NCIMB 9086 / R18194 / 383).